Reading from the N-terminus, the 154-residue chain is Insulin-like growth factor 1 (154 aa).

Residues 50–78 are b; it reads GPETLCGAELVDALQFVCGDRGFYFNKPT. 3 disulfide bridges follow: cysteine 55–cysteine 97, cysteine 67–cysteine 110, and cysteine 96–cysteine 101. Residues 79-90 are c; it reads GYGSSSRRAPQT. The tract at residues 91–111 is a; it reads GIVDECCFRSCDLRRLEMYCA. A d region spans residues 112 to 119; sequence PLKPAKSA. The propeptide at 120–154 is e peptide; the sequence is RSVRAQRHTDMPKAQKEVHLKNTSRGSAGNKNYRM. Residues 121–154 are disordered; sequence SVRAQRHTDMPKAQKEVHLKNTSRGSAGNKNYRM. Residues 126 to 139 show a composition bias toward basic and acidic residues; the sequence is RHTDMPKAQKEVHL. Positions 140–154 are enriched in polar residues; it reads KNTSRGSAGNKNYRM.

This sequence belongs to the insulin family. As to quaternary structure, forms a ternary complex with IGFR1 and ITGAV:ITGB3. Forms a ternary complex with IGFR1 and ITGA6:ITGB4. Forms a ternary complex with IGFBP3 and ALS.

It is found in the secreted. In terms of biological role, the insulin-like growth factors, isolated from plasma, are structurally and functionally related to insulin but have a much higher growth-promoting activity. May be a physiological regulator of [1-14C]-2-deoxy-D-glucose (2DG) transport and glycogen synthesis in osteoblasts. Stimulates glucose transport in bone-derived osteoblastic (PyMS) cells and is effective at much lower concentrations than insulin, not only regarding glycogen and DNA synthesis but also with regard to enhancing glucose uptake. May play a role in synapse maturation. Ca(2+)-dependent exocytosis of IGF1 is required for sensory perception of smell in the olfactory bulb. Acts as a ligand for IGF1R. Binds to the alpha subunit of IGF1R, leading to the activation of the intrinsic tyrosine kinase activity which autophosphorylates tyrosine residues in the beta subunit thus initiating a cascade of down-stream signaling events leading to activation of the PI3K-AKT/PKB and the Ras-MAPK pathways. Binds to integrins ITGAV:ITGB3 and ITGA6:ITGB4. Its binding to integrins and subsequent ternary complex formation with integrins and IGFR1 are essential for IGF1 signaling. Induces the phosphorylation and activation of IGFR1, MAPK3/ERK1, MAPK1/ERK2 and AKT1. As part of the MAPK/ERK signaling pathway, acts as a negative regulator of apoptosis in cardiomyocytes via promotion of STUB1/CHIP-mediated ubiquitination and degradation of ICER-type isoforms of CREM. In Bos taurus (Bovine), this protein is Insulin-like growth factor 1.